We begin with the raw amino-acid sequence, 250 residues long: Ribosomal RNA small subunit methyltransferase J (250 aa).

Residues 101 to 102 (RD), 117 to 118 (ER), 153 to 154 (SS), and Asp171 each bind S-adenosyl-L-methionine.

Belongs to the methyltransferase superfamily. RsmJ family.

The protein resides in the cytoplasm. It catalyses the reaction guanosine(1516) in 16S rRNA + S-adenosyl-L-methionine = N(2)-methylguanosine(1516) in 16S rRNA + S-adenosyl-L-homocysteine + H(+). In terms of biological role, specifically methylates the guanosine in position 1516 of 16S rRNA. This Erwinia tasmaniensis (strain DSM 17950 / CFBP 7177 / CIP 109463 / NCPPB 4357 / Et1/99) protein is Ribosomal RNA small subunit methyltransferase J.